Here is an 81-residue protein sequence, read N- to C-terminus: uncharacterized protein (81 aa).

The next 2 membrane-spanning stretches (helical) occupy residues 10–30 and 56–76; these read FFVL…FLLL and VLYL…AFAI.

Its subcellular location is the host membrane. This is an uncharacterized protein from Acidianus two-tailed virus (ATV).